The sequence spans 596 residues: Elongation factor 4 (596 aa).

The 182-residue stretch at 2–183 (KNIRNFSIIA…EIIRRIPAPN (182 aa)) folds into the tr-type G domain. Residues 14–19 (DHGKST) and 130–133 (NKID) each bind GTP.

This sequence belongs to the TRAFAC class translation factor GTPase superfamily. Classic translation factor GTPase family. LepA subfamily.

It localises to the cell inner membrane. It carries out the reaction GTP + H2O = GDP + phosphate + H(+). Functionally, required for accurate and efficient protein synthesis under certain stress conditions. May act as a fidelity factor of the translation reaction, by catalyzing a one-codon backward translocation of tRNAs on improperly translocated ribosomes. Back-translocation proceeds from a post-translocation (POST) complex to a pre-translocation (PRE) complex, thus giving elongation factor G a second chance to translocate the tRNAs correctly. Binds to ribosomes in a GTP-dependent manner. The polypeptide is Elongation factor 4 (Wolinella succinogenes (strain ATCC 29543 / DSM 1740 / CCUG 13145 / JCM 31913 / LMG 7466 / NCTC 11488 / FDC 602W) (Vibrio succinogenes)).